A 1006-amino-acid chain; its full sequence is Zinc finger protein ZFPM1 (1006 aa).

Residues 1-13 (MSRRKQSNPRQIK) are compositionally biased toward basic residues. Disordered regions lie at residues 1 to 93 (MSRR…DELE) and 114 to 133 (SWGPFHGSVQTRASSPRQAE). The span at 15–25 (SLGDMEAREEV) shows a compositional bias: basic and acidic residues. The span at 42–62 (APSPPSADVNSPPPLPPPTSP) shows a compositional bias: pro residues. Over residues 66–79 (KELEGQEPEPRPTE) the composition is skewed to basic and acidic residues. Residues Ser-84 and Ser-128 each carry the phosphoserine modification. Residues 121–130 (SVQTRASSPR) are compositionally biased toward polar residues. Residues 235 to 268 (VINKDVFPCKDCGIWYRSERNLQAHLLYYCASRQ) form a CCHC FOG-type 1 zinc finger. Zn(2+) contacts are provided by Cys-243, Cys-246, His-259, and Cys-264. Phosphoserine is present on Ser-272. 3 consecutive C2H2-type zinc fingers follow at residues 290–314 (RVCPFPQCRKSCPSASSLEIHMRSH), 320–342 (FVCLICLSAFTTKANCERHLKVH), and 348–371 (GVCHSCGFISTTRDILYSHLVTNH). The segment at 330–341 (TTKANCERHLKV) is interaction with TACC3. Ser-384 bears the Phosphoserine mark. Disordered stretches follow at residues 384–409 (SPGAGHPATKLPPDSLGSFQQQHTAL), 438–460 (NGEARAEPLAQNGGSSEPPAAPR), and 473–515 (APIL…SPVP). The span at 485–515 (APSRTPSPRSPAPARVKAELSSPTPGSSPVP) shows a compositional bias: low complexity. A phosphoserine mark is found at Ser-491 and Ser-494. The CCHC FOG-type 2 zinc finger occupies 571-604 (PGAPKGATCFECEITFSNVNNYYVHKRLYCSGRR). Residues Cys-579, Cys-582, His-595, and Cys-600 each contribute to the Zn(2+) site. Residues 605-681 (APEDAPAARR…SVDDAEDDPS (77 aa)) are disordered. Residues 617 to 629 (APPGPARAPPGQP) are compositionally biased toward pro residues. Phosphoserine occurs at positions 638 and 671. The CCHC FOG-type 3 zinc-finger motif lies at 677–710 (EDDPSRTLCEACNIRFSRHETYTVHKRYYCASRH). 4 residues coordinate Zn(2+): Cys-685, Cys-688, His-701, and Cys-706. Residues 708–810 (SRHDPPPRRP…PRRPLPGAPA (103 aa)) are disordered. Pro residues-rich tracts occupy residues 715 to 735 (RRPAAPPGPPGPAAPPAPSPA) and 754 to 769 (APPPPPPGHAPAPESP). The segment covering 780–791 (GLAPARSPGPAA) has biased composition (low complexity). Residue Ser-786 is modified to Phosphoserine. Residues 794-800 (PIDLSKK) form an interaction with CTBP2 region. A CCHC FOG-type 4 zinc finger spans residues 811-844 (PALADYHECTACRVSFHSLEAYLAHKKYSCPAAP). Zn(2+)-binding residues include Cys-819, Cys-822, His-835, and Cys-840. The C2H2-type 4 zinc-finger motif lies at 854–877 (AACPYCPPNGPVRGDLLEHFRLAH). The segment at 889 to 971 (GVEARTPADR…KGTPAPLPNG (83 aa)) is disordered. Residues Ser-901, Ser-909, Ser-914, and Ser-935 each carry the phosphoserine modification. Pro residues predominate over residues 925 to 950 (PQEPPPGPPPSPAAAPEAVPPPPAPP). Residues 968 to 1001 (LPNGNHRYCRLCNIKFSSLSTFIAHKKYYCSSHA) form a CCHC FOG-type 5 zinc finger. Residues Cys-976, Cys-979, His-992, and Cys-997 each coordinate Zn(2+).

It belongs to the FOG (Friend of GATA) family. In terms of assembly, interacts with corepressor CTBP2; this interaction is however not essential for corepressor activity. Interacts with the N-terminal zinc-finger of GATA1, GATA2 and probably GATA3. Mainly expressed in hematopoietic tissues. Also expressed in adult cerebellum, stomach, lymph node, liver and pancreas. Expressed in fetal heart, liver and spleen.

The protein resides in the nucleus. Transcription regulator that plays an essential role in erythroid and megakaryocytic cell differentiation. Essential cofactor that acts via the formation of a heterodimer with transcription factors of the GATA family GATA1, GATA2 and GATA3. Such heterodimer can both activate or repress transcriptional activity, depending on the cell and promoter context. The heterodimer formed with GATA proteins is essential to activate expression of genes such as NFE2, ITGA2B, alpha- and beta-globin, while it represses expression of KLF1. May be involved in regulation of some genes in gonads. May also be involved in cardiac development, in a non-redundant way with ZFPM2/FOG2. This Homo sapiens (Human) protein is Zinc finger protein ZFPM1 (ZFPM1).